The following is a 126-amino-acid chain: Small ribosomal subunit protein uS13 (126 aa).

A disordered region spans residues 96–126; it reads LPVRGQQTKTNARTRKGRRKGTVANKKKVSK. Residues 107–126 show a composition bias toward basic residues; that stretch reads ARTRKGRRKGTVANKKKVSK.

This sequence belongs to the universal ribosomal protein uS13 family. Part of the 30S ribosomal subunit. Forms a loose heterodimer with protein S19. Forms two bridges to the 50S subunit in the 70S ribosome.

Its function is as follows. Located at the top of the head of the 30S subunit, it contacts several helices of the 16S rRNA. In the 70S ribosome it contacts the 23S rRNA (bridge B1a) and protein L5 of the 50S subunit (bridge B1b), connecting the 2 subunits; these bridges are implicated in subunit movement. Contacts the tRNAs in the A and P-sites. The chain is Small ribosomal subunit protein uS13 from Hydrogenobaculum sp. (strain Y04AAS1).